The primary structure comprises 331 residues: ADP-L-glycero-D-manno-heptose-6-epimerase (331 aa).

NADP(+)-binding positions include 11–12 (FI), 32–33 (DN), Lys-39, Lys-54, 75–79 (EGACS), and Asn-92. Tyr-139 serves as the catalytic Proton acceptor. Residue Lys-143 coordinates NADP(+). Asn-168 lines the substrate pocket. The NADP(+) site is built by Val-169 and Lys-177. Lys-177 functions as the Proton acceptor in the catalytic mechanism. Substrate is bound by residues Arg-179, His-186, 200–203 (FGEY), Arg-213, and Tyr-292.

This sequence belongs to the NAD(P)-dependent epimerase/dehydratase family. HldD subfamily. Homopentamer. NADP(+) serves as cofactor.

The enzyme catalyses ADP-D-glycero-beta-D-manno-heptose = ADP-L-glycero-beta-D-manno-heptose. It participates in nucleotide-sugar biosynthesis; ADP-L-glycero-beta-D-manno-heptose biosynthesis; ADP-L-glycero-beta-D-manno-heptose from D-glycero-beta-D-manno-heptose 7-phosphate: step 4/4. In terms of biological role, catalyzes the interconversion between ADP-D-glycero-beta-D-manno-heptose and ADP-L-glycero-beta-D-manno-heptose via an epimerization at carbon 6 of the heptose. This Cupriavidus metallidurans (strain ATCC 43123 / DSM 2839 / NBRC 102507 / CH34) (Ralstonia metallidurans) protein is ADP-L-glycero-D-manno-heptose-6-epimerase.